The following is a 394-amino-acid chain: uncharacterized protein (394 aa).

11 helical membrane-spanning segments follow: residues 10-30 (PALI…NYYA), 50-70 (FIVT…VPLG), 79-99 (IVSM…SQSL), 100-120 (AMMI…QILV), 138-158 (TIMS…GLLA), 166-186 (VFWV…RGLP), 218-238 (LLGC…AFLL), 243-263 (FNYS…GALG), 291-311 (WLAI…ILVL), 337-357 (LTAG…LISA), and 364-384 (GWAG…LVWW).

The protein belongs to the major facilitator superfamily.

The protein resides in the cell inner membrane. This is an uncharacterized protein from Escherichia coli O157:H7.